The sequence spans 309 residues: Ferrochelatase (309 aa).

Fe cation contacts are provided by His185 and Glu264.

It belongs to the ferrochelatase family.

It is found in the cytoplasm. The enzyme catalyses heme b + 2 H(+) = protoporphyrin IX + Fe(2+). It functions in the pathway porphyrin-containing compound metabolism; protoheme biosynthesis; protoheme from protoporphyrin-IX: step 1/1. Functionally, catalyzes the ferrous insertion into protoporphyrin IX. This is Ferrochelatase from Aquifex aeolicus (strain VF5).